The primary structure comprises 447 residues: Interferon-induced protein 44-like (447 aa).

A TLDc domain is found at 1–159 (MKVTARLTWI…PVECEIFRVD (159 aa)).

The protein belongs to the IFI44 family. As to quaternary structure, HA-28 antigen forms a complex with Kb MHC in BALB.B donor cells. Interacts with FKBP5; this interaction modulates IKBKB and IKBKE kinase activities. Expressed on cells of the hematopoietic lineage. Detected in transformed cell lines of the macrophage and B-cell lineage. Expressed in spleen and bone marrow.

Its subcellular location is the cytoplasm. Its function is as follows. Type I interferon-stimulated gene (ISG) that plays a critical role in antiviral and antibacterial activity. During bacterial infection, promotes macrophage differentiation and facilitates inflammatory cytokine secretion. Plays a role in the control of respiratory syncycial virus/RSV infection, reducing the ability of the virus to replicate. Acts as a feedback regulator of IFN responses by negatively regulating IKBKB kinase activity through interaction with FKBP5. In terms of biological role, precursor of the histocompatibility antigen HA-28 in BALB.B mice. More generally, minor histocompatibility antigens refer to immunogenic peptide which, when complexed with MHC, can generate an immune response after recognition by specific T-cells. The peptides are derived from polymorphic intracellular proteins, which are cleaved by normal pathways of antigen processing. The binding of these peptides to MHC molecules and its expression on the cell surface can stimulate T-cell responses and thereby trigger graft rejection or graft-versus-host disease (GVHD). More specifically, HA-28 minor antigen is transcribed in the BALB.B donor but not in host C57BL/6 cells. HA-28 is presented to the donor BALB.B cell surface by Kb MHC. This complex HA-28/Kb MHC elicits cytotoxic T-cell response in C57BL/6 mice immunized with BALB.B spleen cells. It induces C57BL/6 mice cells recognition and lysis by CD8 T-cell from BALB.B mice. This chain is Interferon-induced protein 44-like (Ifi44l), found in Mus musculus (Mouse).